Consider the following 69-residue polypeptide: Large ribosomal subunit protein bL28 (69 aa).

This sequence belongs to the bacterial ribosomal protein bL28 family.

This is Large ribosomal subunit protein bL28 from Nitratidesulfovibrio vulgaris (strain ATCC 29579 / DSM 644 / CCUG 34227 / NCIMB 8303 / VKM B-1760 / Hildenborough) (Desulfovibrio vulgaris).